A 1128-amino-acid chain; its full sequence is Transient receptor potential-gamma protein (1128 aa).

At 1–325 (MMEEENTIRP…MALQAVDIIR (325 aa)) the chain is on the cytoplasmic side. 2 ANK repeats span residues 57-86 (LGRT…DTKD) and 131-160 (PDIT…VLPM). Residues 326–346 (IGIMFPIFSLAYILAPYSSIG) traverse the membrane as a helical segment. Residues 347 to 403 (QTMRKPFIKFICHSASYFTFLFLLMLASQRIETFIGGWFFADSSGMLNTMEELPTKR) are Extracellular-facing. Residues 404–424 (GAKPTFIEWLILAWVSGLIWS) traverse the membrane as a helical segment. Residues 425 to 444 (EVKQLWDVGLQEYLNDMWNV) are Cytoplasmic-facing. The helical transmembrane segment at 445–465 (IDFVTNSLYVATVALRVVSFF) threads the bilayer. Residues 466-492 (QVQKEMIYNSHATDLPRERWDAWDPML) are Extracellular-facing. Residues 493-513 (ISEGLFSAANIFSSLKLVYIF) traverse the membrane as a helical segment. The Cytoplasmic segment spans residues 514–535 (SVNPHLGPLQVSLSRMVMDIMK). The chain crosses the membrane as a helical span at residues 536–556 (FFFLYVLVLFAFGSGLNQLLW). At 557-629 (YYADLEKKRC…GIKIFTRFWG (73 aa)) the chain is on the extracellular side. A helical transmembrane segment spans residues 630–650 (MLMFGTYSVINIVVLLNLLIA). Topologically, residues 651-1128 (MMNHSYQLIS…SCVSTTGAIG (478 aa)) are cytoplasmic. 2 disordered regions span residues 865–898 (RQQS…TASS) and 1064–1111 (AAEA…SVNS). The segment covering 878–893 (ESPTTPTAPQGTQGAA) has biased composition (low complexity). Positions 1085 to 1111 (TQSQHDSVETNSTFTLSIDPSNTSVNS) are enriched in polar residues.

It belongs to the transient receptor (TC 1.A.4) family. STrpC subfamily. Interacts preferentially with trpl and interacts to a lower extent with trp. As to expression, expressed predominantly in the rhabdomeres of photoreceptor cells.

It is found in the cell projection. Its subcellular location is the rhabdomere membrane. In terms of biological role, a light-sensitive calcium channel that is required for inositide-mediated Ca(2+) entry in the retina during phospholipase C (PLC)-mediated phototransduction. Forms a regulated cation channel when heteromultimerized with trpl. The protein is Transient receptor potential-gamma protein (Trpgamma) of Drosophila melanogaster (Fruit fly).